A 302-amino-acid polypeptide reads, in one-letter code: Acetylesterase (302 aa).

A signal peptide spans 1 to 21 (MGRFLTTTALALLATGGAATA). Residues N84 and N101 are each glycosylated (N-linked (GlcNAc...) asparagine).

It belongs to the carbohydrate esterase CE16 family.

It localises to the secreted. It carries out the reaction an acetyl ester + H2O = an aliphatic alcohol + acetate + H(+). Acetyl esterase that acts as an exo-deacetylase. Liberates acetic acid from xylo-oligomers. This chain is Acetylesterase, found in Thermothelomyces thermophilus (Myceliophthora thermophila).